The primary structure comprises 428 residues: Kynureninase (428 aa).

Pyridoxal 5'-phosphate contacts are provided by residues Thr-104, Thr-105, 132–135, Asp-213, His-216, and Tyr-238; that span reads FPSD. An N6-(pyridoxal phosphate)lysine modification is found at Lys-239. Residues Trp-267 and Thr-295 each coordinate pyridoxal 5'-phosphate.

The protein belongs to the kynureninase family. Homodimer. Requires pyridoxal 5'-phosphate as cofactor.

The enzyme catalyses L-kynurenine + H2O = anthranilate + L-alanine + H(+). It carries out the reaction 3-hydroxy-L-kynurenine + H2O = 3-hydroxyanthranilate + L-alanine + H(+). Its pathway is amino-acid degradation; L-kynurenine degradation; L-alanine and anthranilate from L-kynurenine: step 1/1. The protein operates within cofactor biosynthesis; NAD(+) biosynthesis; quinolinate from L-kynurenine: step 2/3. Functionally, catalyzes the cleavage of L-kynurenine (L-Kyn) and L-3-hydroxykynurenine (L-3OHKyn) into anthranilic acid (AA) and 3-hydroxyanthranilic acid (3-OHAA), respectively. This Bacillus cereus (strain ZK / E33L) protein is Kynureninase.